The chain runs to 292 residues: 4-hydroxy-tetrahydrodipicolinate synthase (292 aa).

Pyruvate is bound at residue T45. The active-site Proton donor/acceptor is Y133. The active-site Schiff-base intermediate with substrate is the K161. A pyruvate-binding site is contributed by I203.

Belongs to the DapA family. Homotetramer; dimer of dimers.

Its subcellular location is the cytoplasm. The enzyme catalyses L-aspartate 4-semialdehyde + pyruvate = (2S,4S)-4-hydroxy-2,3,4,5-tetrahydrodipicolinate + H2O + H(+). It participates in amino-acid biosynthesis; L-lysine biosynthesis via DAP pathway; (S)-tetrahydrodipicolinate from L-aspartate: step 3/4. Catalyzes the condensation of (S)-aspartate-beta-semialdehyde [(S)-ASA] and pyruvate to 4-hydroxy-tetrahydrodipicolinate (HTPA). The chain is 4-hydroxy-tetrahydrodipicolinate synthase from Salmonella paratyphi A (strain AKU_12601).